Consider the following 369-residue polypeptide: Histidinol-phosphate aminotransferase 2 (369 aa).

K231 is modified (N6-(pyridoxal phosphate)lysine).

The protein belongs to the class-II pyridoxal-phosphate-dependent aminotransferase family. Histidinol-phosphate aminotransferase subfamily. As to quaternary structure, homodimer. Requires pyridoxal 5'-phosphate as cofactor.

It carries out the reaction L-histidinol phosphate + 2-oxoglutarate = 3-(imidazol-4-yl)-2-oxopropyl phosphate + L-glutamate. It participates in amino-acid biosynthesis; L-histidine biosynthesis; L-histidine from 5-phospho-alpha-D-ribose 1-diphosphate: step 7/9. This chain is Histidinol-phosphate aminotransferase 2, found in Legionella pneumophila (strain Paris).